Here is a 262-residue protein sequence, read N- to C-terminus: Methylthioribulose-1-phosphate dehydratase (262 aa).

Residue Cys-115 coordinates substrate. Zn(2+) contacts are provided by His-133 and His-135. Glu-158 functions as the Proton donor/acceptor in the catalytic mechanism. His-223 contacts Zn(2+).

The protein belongs to the aldolase class II family. MtnB subfamily. It depends on Zn(2+) as a cofactor.

It localises to the cytoplasm. It catalyses the reaction 5-(methylsulfanyl)-D-ribulose 1-phosphate = 5-methylsulfanyl-2,3-dioxopentyl phosphate + H2O. Its pathway is amino-acid biosynthesis; L-methionine biosynthesis via salvage pathway; L-methionine from S-methyl-5-thio-alpha-D-ribose 1-phosphate: step 2/6. Functionally, catalyzes the dehydration of methylthioribulose-1-phosphate (MTRu-1-P) into 2,3-diketo-5-methylthiopentyl-1-phosphate (DK-MTP-1-P). This chain is Methylthioribulose-1-phosphate dehydratase, found in Meyerozyma guilliermondii (strain ATCC 6260 / CBS 566 / DSM 6381 / JCM 1539 / NBRC 10279 / NRRL Y-324) (Yeast).